The chain runs to 131 residues: Auxin-responsive protein SAUR77 (131 aa).

Belongs to the ARG7 family.

Functionally, may be involved in the regulation of ethylene receptor signaling. Promotes cell expansion and plant growth. The protein is Auxin-responsive protein SAUR77 of Arabidopsis thaliana (Mouse-ear cress).